Reading from the N-terminus, the 934-residue chain is MITHGCYTRTRHKHKLKKTLIMLSAGLGLFFYVNQNSFANGENYFKLGSDSKLLTHDSYQNRLFYTLKTGETVADLSKSQDINLSTIWSLNKHLYSSESEMMKAAPGQQIILPLKKLPFEYSALPLLGSAPLVAAGGVAGHTNKLTKMSPDVTKSNMTDDKALNYAAQQAASLGSQLQSRSLNGDYAKDTALGIAGNQASSQLQAWLQHYGTAEVNLQSGNNFDGSSLDFLLPFYDSEKMLAFGQVGARYIDSRFTANLGAGQRFFLPANMLGYNVFIDQDFSGDNTRLGIGGEYWRDYFKSSVNGYFRMSGWHESYNKKDYDERPANGFDIRFNGYLPSYPALGAKLIYEQYYGDNVALFNSDKLQSNPGAATVGVNYTPIPLVTMGIDYRHGTGNENDLLYSMQFRYQFDKSWSQQIEPQYVNELRTLSGSRYDLVQRNNNIILEYKKQDILSLNIPHDINGTEHSTQKIQLIVKSKYGLDRIVWDDSALRSQGGQIQHSGSQSAQDYQAILPAYVQGGSNIYKVTARAYDRNGNSSNNVQLTITVLSNGQVVDQVGVTDFTADKTSAKADNADTITYTATVKKNGVAQANVPVSFNIVSGTATLGANSAKTDANGKATVTLKSSTPGQVVVSAKTAEMTSALNASAVIFFDQTKASITEIKADKTTAVANGKDAIKYTVKVMKNGQPVNNQSVTFSTNFGMFNGKSQTQATTGNDGRATITLTSSSAGKATVSATVSDGAEVKATEVTFFDELKIDNKVDIIGNNVRGELPNIWLQYGQFKLKASGGDGTYSWYSENTSIATVDASGKVTLNGKGSVVIKATSGDKQTVSYTIKAPSYMIKVDKQAYYADAMSICKNLLPSTQTVLSDIYDSWGAANKYSHYSSMNSITAWIKQTSSEQRSGVSSTYNLITQNPLPGVNVNTPNVYAVCVE.

Positions M1–A39 are cleaved as a signal peptide. Positions N40 to T153 are peptidoglycan-binding. A sufficient for homodimerization region spans residues N40–T153. Residues N40–T212 form a required for periplasmic localization region. Residues L63–L112 form the LysM domain. The segment at Y210–F411 is inverse autotransporter. The tract at residues L402–F411 is signature sequence for beta-barrel assembly machinery (BAM), which recognizes the unfolded beta-barrel in the periplasm. The tract at residues L437–K449 is minimum linker residues necessary for formation of a heat-modifiable beta-barrel. Big-1 domains lie at V560–F653 and I660–F753. Positions A747–E934 are intimin receptor Tir-binding. Residues A787–S833 form the BIG2 domain. A disulfide bridge links C858 with C932.

This sequence belongs to the intimin/invasin family. Homodimer. Interacts with Tir.

It is found in the cell outer membrane. An inverse autotransporter. Adhesin, which mediates attachment to the human intestine epithelial cells. Necessary for the production of attaching and effacing lesions on infected human tissue culture cells. Anchored to the outer membrane by binding to peptidoglycan (PGN) via its periplasmic domain, thus helping in receptor interactions during host invasion. PGN-binding may also aid in resisting mechanical and chemical stress during transit of the bacterium through the gastrointestinal tract of the host. This Escherichia coli O157:H7 protein is Intimin.